The primary structure comprises 188 residues: Pro-adrenomedullin (188 aa).

An N-terminal signal peptide occupies residues 1–21; the sequence is MKLVPVALMYLGSLAFLGADT. Arg41 bears the Arginine amide mark. A propeptide spanning residues 45 to 92 is cleaved from the precursor; the sequence is ELRLSSSYPTGIADLKAGPAQTVIRPQDVKGSSRSPQASIPDAARIRV. The cysteines at positions 110 and 115 are disulfide-linked. Residues 131–177 form a disordered region; it reads DKDGVAPRSKISPQGYGRRRRRSLPEASLGRTLRSQEPQAHGAPASP. Tyr146 bears the Tyrosine amide mark. The propeptide at 153–188 is preproAM C-terminal fragment; sequence SLPEASLGRTLRSQEPQAHGAPASPAHQVLATLFRI.

Belongs to the adrenomedullin family. Highly expressed in adrenal glands, lung and kidney.

Its subcellular location is the secreted. Its function is as follows. Adrenomedullin/ADM and proadrenomedullin N-20 terminal peptide/PAMP are peptide hormones that act as potent hypotensive and vasodilatator agents. Numerous actions have been reported most related to the physiologic control of fluid and electrolyte homeostasis. Functionally, ADM function is mediated by the CALCRL-RAMP2 and CALCRL-RAMP3 receptor complexes with ADM showing the highest potency for the CALCRL-RAMP2 complex. The protein is Pro-adrenomedullin (ADM) of Sus scrofa (Pig).